The following is a 121-amino-acid chain: Glycine cleavage system H protein (121 aa).

Positions valine 16–arginine 98 constitute a Lipoyl-binding domain. An N6-lipoyllysine modification is found at lysine 57.

The protein belongs to the GcvH family. The glycine cleavage system is composed of four proteins: P, T, L and H. The cofactor is (R)-lipoate.

Its function is as follows. The glycine cleavage system catalyzes the degradation of glycine. The H protein shuttles the methylamine group of glycine from the P protein to the T protein. The protein is Glycine cleavage system H protein of Phenylobacterium zucineum (strain HLK1).